A 1395-amino-acid chain; its full sequence is DNA-directed RNA polymerase subunit beta' (1395 aa).

The Zn(2+) site is built by Cys-70, Cys-72, Cys-85, and Cys-88. Residues Asp-461, Asp-463, and Asp-465 each contribute to the Mg(2+) site. Residues Cys-815, Cys-889, Cys-896, and Cys-899 each coordinate Zn(2+).

This sequence belongs to the RNA polymerase beta' chain family. The RNAP catalytic core consists of 2 alpha, 1 beta, 1 beta' and 1 omega subunit. When a sigma factor is associated with the core the holoenzyme is formed, which can initiate transcription. It depends on Mg(2+) as a cofactor. Requires Zn(2+) as cofactor.

The catalysed reaction is RNA(n) + a ribonucleoside 5'-triphosphate = RNA(n+1) + diphosphate. DNA-dependent RNA polymerase catalyzes the transcription of DNA into RNA using the four ribonucleoside triphosphates as substrates. The chain is DNA-directed RNA polymerase subunit beta' from Ruthia magnifica subsp. Calyptogena magnifica.